The primary structure comprises 365 residues: Succinyl-diaminopimelate desuccinylase (365 aa).

H65 serves as a coordination point for Zn(2+). D67 is an active-site residue. D96 contacts Zn(2+). The Proton acceptor role is filled by E126. The Zn(2+) site is built by E127, E155, and H340.

Belongs to the peptidase M20A family. DapE subfamily. As to quaternary structure, homodimer. Requires Zn(2+) as cofactor. The cofactor is Co(2+).

The enzyme catalyses N-succinyl-(2S,6S)-2,6-diaminopimelate + H2O = (2S,6S)-2,6-diaminopimelate + succinate. Its pathway is amino-acid biosynthesis; L-lysine biosynthesis via DAP pathway; LL-2,6-diaminopimelate from (S)-tetrahydrodipicolinate (succinylase route): step 3/3. Functionally, catalyzes the hydrolysis of N-succinyl-L,L-diaminopimelic acid (SDAP), forming succinate and LL-2,6-diaminopimelate (DAP), an intermediate involved in the bacterial biosynthesis of lysine and meso-diaminopimelic acid, an essential component of bacterial cell walls. This is Succinyl-diaminopimelate desuccinylase from Campylobacter jejuni subsp. jejuni serotype O:2 (strain ATCC 700819 / NCTC 11168).